A 93-amino-acid chain; its full sequence is MDLWKFFSKESSTSKNVAKERLKLVLVHDRANCSPDFLEMVKGDIIKVISDYMEIDEDGLDIRLTKTKREYDDASIPALVANIPIKKMKDRGR.

Belongs to the MinE family.

Prevents the cell division inhibition by proteins MinC and MinD at internal division sites while permitting inhibition at polar sites. This ensures cell division at the proper site by restricting the formation of a division septum at the midpoint of the long axis of the cell. This Alkaliphilus oremlandii (strain OhILAs) (Clostridium oremlandii (strain OhILAs)) protein is Cell division topological specificity factor.